Reading from the N-terminus, the 331-residue chain is 6-phosphogluconolactonase (331 aa).

An N6-acetyllysine modification is found at K287.

This sequence belongs to the cycloisomerase 2 family.

The catalysed reaction is 6-phospho-D-glucono-1,5-lactone + H2O = 6-phospho-D-gluconate + H(+). Its pathway is carbohydrate degradation; pentose phosphate pathway; D-ribulose 5-phosphate from D-glucose 6-phosphate (oxidative stage): step 2/3. Functionally, catalyzes the hydrolysis of 6-phosphogluconolactone to 6-phosphogluconate. The sequence is that of 6-phosphogluconolactonase from Shigella flexneri.